A 218-amino-acid chain; its full sequence is Small ribosomal subunit protein uS5 (218 aa).

Residues 1–45 form a disordered region; it reads MPGRQRRDGGNGPAGQNSNGPEGRDNRRGGGDRRGGGDRRDNAAE. The segment covering 22–45 has biased composition (basic and acidic residues); that stretch reads EGRDNRRGGGDRRGGGDRRDNAAE. Residues 48 to 111 enclose the S5 DRBM domain; the sequence is QLERVVAINR…EEARKGFFRV (64 aa).

The protein belongs to the universal ribosomal protein uS5 family. Part of the 30S ribosomal subunit. Contacts proteins S4 and S8.

With S4 and S12 plays an important role in translational accuracy. Its function is as follows. Located at the back of the 30S subunit body where it stabilizes the conformation of the head with respect to the body. The protein is Small ribosomal subunit protein uS5 of Nocardia farcinica (strain IFM 10152).